Reading from the N-terminus, the 284-residue chain is Nodulation protein O (284 aa).

The tract at residues 1-27 (MNIKGSDNGSFIKGSPENDIIDGGKKN) is disordered. 5 Hemolysin-type calcium-binding repeats span residues 13–30 (KGSPENDIIDGGKKNDWI), 31–48 (DAGNGDDRIKAGDGQDSI), 58–75 (WAGKGSDVIHADGGDDLL), 94–111 (HSGEGDDVLYAGPGSDIL), and 112–129 (VAGDGADVLTGGDDGDAF). 4 residues coordinate Ca(2+): Asp-100, Asp-109, Asp-118, and Asp-127. Positions 208 to 222 (DRGFASAAAAATAID) are export signal (aspartic acid box).

The protein localises to the secreted. In terms of biological role, the NodO protein may play a role in nodule development by direct interaction with the root hair cells or some other plant surface in a calcium-dependent manner. This is Nodulation protein O (nodO) from Rhizobium leguminosarum bv. viciae.